The following is a 642-amino-acid chain: Zinc finger protein 398 (642 aa).

Disordered regions lie at residues 1-24 and 198-225; these read MAEAAPAPTSEWDSECLTSLQPLP and EGEHNTEDQAGPEESEIPTDPSEEPGIS. The KRAB domain occupies 143 to 214; sequence VAFDDVSIYF…DQAGPEESEI (72 aa). Residues 207–220 are compositionally biased toward acidic residues; the sequence is AGPEESEIPTDPSE. K265 participates in a covalent cross-link: Glycyl lysine isopeptide (Lys-Gly) (interchain with G-Cter in SUMO2). The segment at 343 to 364 adopts a C2H2-type 1; atypical zinc-finger fold; it reads FSCHHCGKNLSQDMLLTHQCSH. The C2H2-type 2; degenerate zinc finger occupies 370-392; the sequence is LPCAQCPKHFTPQADLSSTSQDH. C2H2-type zinc fingers lie at residues 398–420, 427–449, 455–477, 483–505, 511–533, 539–561, and 567–590; these read PTCPHCARTFTHPSRLTYHLRVH, FPCPDCPKRFADQARLTSHRRAH, FRCAQCGRSFSLKISLLLHQRGH, FSCPQCGIDFNGHSALIRHQMIH, YPCTDCSKSFMRKEHLLNHRRLH, FSCPHCGKSFIRKHHLMKHQRIH, and YPCSYCGRSFRYKQTLKDHLRSGH. A disordered region spans residues 587 to 615; it reads RSGHNGGCGGDSDPSGQPPNPPGPLITGL.

It belongs to the krueppel C2H2-type zinc-finger protein family.

It localises to the nucleus. Functions as a transcriptional activator. This is Zinc finger protein 398 (ZNF398) from Homo sapiens (Human).